We begin with the raw amino-acid sequence, 1162 residues long: DNA-directed RNA polymerase subunit beta (1162 aa).

It belongs to the RNA polymerase beta chain family. As to quaternary structure, the RNAP catalytic core consists of 2 alpha, 1 beta, 1 beta' and 1 omega subunit. When a sigma factor is associated with the core the holoenzyme is formed, which can initiate transcription.

The catalysed reaction is RNA(n) + a ribonucleoside 5'-triphosphate = RNA(n+1) + diphosphate. Its function is as follows. DNA-dependent RNA polymerase catalyzes the transcription of DNA into RNA using the four ribonucleoside triphosphates as substrates. The polypeptide is DNA-directed RNA polymerase subunit beta (Clavibacter michiganensis subsp. michiganensis (strain NCPPB 382)).